A 209-amino-acid polypeptide reads, in one-letter code: Large ribosomal subunit protein uL3 (209 aa).

Gln-150 carries the post-translational modification N5-methylglutamine.

The protein belongs to the universal ribosomal protein uL3 family. Part of the 50S ribosomal subunit. Forms a cluster with proteins L14 and L19. Post-translationally, methylated by PrmB.

Functionally, one of the primary rRNA binding proteins, it binds directly near the 3'-end of the 23S rRNA, where it nucleates assembly of the 50S subunit. This is Large ribosomal subunit protein uL3 from Cronobacter sakazakii (strain ATCC BAA-894) (Enterobacter sakazakii).